We begin with the raw amino-acid sequence, 184 residues long: uncharacterized protein (184 aa).

A signal peptide spans 1 to 20 (MYQLEKIWVLLCLALVGVLG).

This is an uncharacterized protein from Drosophila melanogaster (Fruit fly).